The chain runs to 295 residues: MLKALEKAGILVEALPYIKKFSGKTVVIKYGGAAMVNDQLKEAVIMDVILMKLVGIHPVVVHGGGPEINGMLDRLGLKSHFIQGLRVTDESTMEVVEMVLAGKVNKEIVALIQRFGGKAVGLCGKDGGLIQAKKRFELVKNEGGARVPTDIGFVGDVVKIEPGLVRELADRGYIPVIAPIGVGEKGESYNINADTAAGELAQALKADKLVLLTDVEGILRDRKDPSSLISSLRIDDVPALVEEGVISGGMIPKVACCVEALQGGVGQTHIIDGRLPHSLLLEVFTDKGIGTMVLK.

Residues 64–65 (GG), arginine 86, and asparagine 190 each bind substrate.

It belongs to the acetylglutamate kinase family. ArgB subfamily.

Its subcellular location is the cytoplasm. It carries out the reaction N-acetyl-L-glutamate + ATP = N-acetyl-L-glutamyl 5-phosphate + ADP. The protein operates within amino-acid biosynthesis; L-arginine biosynthesis; N(2)-acetyl-L-ornithine from L-glutamate: step 2/4. In terms of biological role, catalyzes the ATP-dependent phosphorylation of N-acetyl-L-glutamate. The protein is Acetylglutamate kinase of Heliobacterium modesticaldum (strain ATCC 51547 / Ice1).